The chain runs to 376 residues: DNA replication and repair protein RecF (376 aa).

Position 35–42 (35–42 (GDNGSGKT)) interacts with ATP.

Belongs to the RecF family.

The protein localises to the cytoplasm. Functionally, the RecF protein is involved in DNA metabolism; it is required for DNA replication and normal SOS inducibility. RecF binds preferentially to single-stranded, linear DNA. It also seems to bind ATP. The chain is DNA replication and repair protein RecF from Agrobacterium fabrum (strain C58 / ATCC 33970) (Agrobacterium tumefaciens (strain C58)).